Reading from the N-terminus, the 310-residue chain is Aspartate carbamoyltransferase catalytic subunit (310 aa).

Positions 58 and 59 each coordinate carbamoyl phosphate. K87 contacts L-aspartate. Carbamoyl phosphate contacts are provided by R108, H136, and Q139. R169 and R229 together coordinate L-aspartate. Carbamoyl phosphate is bound by residues L268 and P269.

This sequence belongs to the aspartate/ornithine carbamoyltransferase superfamily. ATCase family. In terms of assembly, heterododecamer (2C3:3R2) of six catalytic PyrB chains organized as two trimers (C3), and six regulatory PyrI chains organized as three dimers (R2).

It carries out the reaction carbamoyl phosphate + L-aspartate = N-carbamoyl-L-aspartate + phosphate + H(+). It participates in pyrimidine metabolism; UMP biosynthesis via de novo pathway; (S)-dihydroorotate from bicarbonate: step 2/3. Catalyzes the condensation of carbamoyl phosphate and aspartate to form carbamoyl aspartate and inorganic phosphate, the committed step in the de novo pyrimidine nucleotide biosynthesis pathway. This chain is Aspartate carbamoyltransferase catalytic subunit, found in Leptospira biflexa serovar Patoc (strain Patoc 1 / Ames).